The chain runs to 92 residues: Small ribosomal subunit protein uS19 (92 aa).

It belongs to the universal ribosomal protein uS19 family.

Protein S19 forms a complex with S13 that binds strongly to the 16S ribosomal RNA. The polypeptide is Small ribosomal subunit protein uS19 (Baumannia cicadellinicola subsp. Homalodisca coagulata).